Here is a 598-residue protein sequence, read N- to C-terminus: MAESMKGLHRTHRCTELSNSNVGEIVTVMGWVQKSRNKGGIIFVDLRDRSGLLQIIFEEGDIGTEMFEKASKLRSEFVVAVVGKVETRSGAVNENLLTGTIEVRATELRILSESETPPFPIEEGSKTKEELRLKYRYLDLRRPDLVRNLMLRSKVATLTRQFLSDEGFLEIETPMLTKSTPEGARDYLVPSRVHPGNFYALPQSPQIFKQLLMVSGYDRYFQIVKCFRDEDLRADRQPEFTQIDMELSFVDVDDVISVNERLLQKMFKESIGIDVSLPIQRMTWREAMDRYGSDKPDTRFGMELKNVSELVKDCGFAVFTGALENGGSVRGINANGQGEMPRKKIDALIEFAKGYGAKGLAYLSINEDGTYKSSFSKFMTEEELSALVAAMEAKPGDLLFFAADKDKVVFDVLGNLRLEIARNLELLDKNTYNFLWVTEFPLLEYSEEEGRYTAMHHPFTMPMDEDLPLLETDPGKVRAKAYDIVLNGTEVGGGSVRIFQNNVQEKMFEVLGFTKEEAYERFGFLLNAFKYGVPPHAGLAYGLDRLVMLMAKEDSIRDVIAFPKVKDASCLLTDAPNVVDDKQLEELSIALAKKATEE.

E182 is a binding site for L-aspartate. Residues 206–209 (QIFK) are aspartate. R228 contacts L-aspartate. ATP contacts are provided by residues 228–230 (RDE) and Q237. L-aspartate is bound at residue H456. E490 provides a ligand contact to ATP. R497 is an L-aspartate binding site. 542–545 (GLDR) serves as a coordination point for ATP.

Belongs to the class-II aminoacyl-tRNA synthetase family. Type 1 subfamily. In terms of assembly, homodimer.

It localises to the cytoplasm. It carries out the reaction tRNA(Asx) + L-aspartate + ATP = L-aspartyl-tRNA(Asx) + AMP + diphosphate. Functionally, aspartyl-tRNA synthetase with relaxed tRNA specificity since it is able to aspartylate not only its cognate tRNA(Asp) but also tRNA(Asn). Reaction proceeds in two steps: L-aspartate is first activated by ATP to form Asp-AMP and then transferred to the acceptor end of tRNA(Asp/Asn). The polypeptide is Aspartate--tRNA(Asp/Asn) ligase (Lachnoclostridium phytofermentans (strain ATCC 700394 / DSM 18823 / ISDg) (Clostridium phytofermentans)).